Reading from the N-terminus, the 372-residue chain is Glycerophosphodiester phosphodiesterase GDPD6 (372 aa).

The N-terminal stretch at 1 to 21 (MAFKYLLPLLLLSLLVANCAS) is a signal peptide. The segment at 32–58 (KHATKKPLQTSRPYNLAHRGSNGELPE) is disordered. The GP-PDE domain occupies 44-362 (PYNLAHRGSN…DFTGSLHNYQ (319 aa)). N120, N239, and N260 each carry an N-linked (GlcNAc...) asparagine glycan.

It belongs to the glycerophosphoryl diester phosphodiesterase family. Expressed in flowers and siliques.

The catalysed reaction is a sn-glycero-3-phosphodiester + H2O = an alcohol + sn-glycerol 3-phosphate + H(+). The polypeptide is Glycerophosphodiester phosphodiesterase GDPD6 (Arabidopsis thaliana (Mouse-ear cress)).